The following is a 243-amino-acid chain: NAD-dependent protein deacylase (243 aa).

The region spanning 1–234 (MYQHIVVLTG…PKLVDTILAG (234 aa)) is the Deacetylase sirtuin-type domain. Residue 10 to 29 (GAGISAESGLRTFRDQDGLW) coordinates NAD(+). 2 residues coordinate substrate: Tyr-54 and Arg-57. 91 to 94 (QNID) contacts NAD(+). His-109 functions as the Proton acceptor in the catalytic mechanism. Cys-117 and Cys-136 together coordinate Zn(2+). NAD(+) contacts are provided by residues 176–178 (GTS), 202–204 (NLQ), and Ala-220.

The protein belongs to the sirtuin family. Class III subfamily. Zn(2+) serves as cofactor.

The protein localises to the cytoplasm. The enzyme catalyses N(6)-acetyl-L-lysyl-[protein] + NAD(+) + H2O = 2''-O-acetyl-ADP-D-ribose + nicotinamide + L-lysyl-[protein]. It carries out the reaction N(6)-succinyl-L-lysyl-[protein] + NAD(+) + H2O = 2''-O-succinyl-ADP-D-ribose + nicotinamide + L-lysyl-[protein]. Its function is as follows. NAD-dependent lysine deacetylase and desuccinylase that specifically removes acetyl and succinyl groups on target proteins. Modulates the activities of several proteins which are inactive in their acylated form. In Shewanella oneidensis (strain ATCC 700550 / JCM 31522 / CIP 106686 / LMG 19005 / NCIMB 14063 / MR-1), this protein is NAD-dependent protein deacylase.